Reading from the N-terminus, the 487-residue chain is Protein nucleotidyltransferase YdiU (487 aa).

Residues glycine 90, glycine 92, arginine 93, lysine 113, aspartate 125, glycine 126, arginine 176, and arginine 183 each contribute to the ATP site. Aspartate 252 acts as the Proton acceptor in catalysis. Mg(2+) contacts are provided by asparagine 253 and aspartate 262. Aspartate 262 contributes to the ATP binding site.

Belongs to the SELO family. Mg(2+) is required as a cofactor. It depends on Mn(2+) as a cofactor.

It carries out the reaction L-seryl-[protein] + ATP = 3-O-(5'-adenylyl)-L-seryl-[protein] + diphosphate. It catalyses the reaction L-threonyl-[protein] + ATP = 3-O-(5'-adenylyl)-L-threonyl-[protein] + diphosphate. The catalysed reaction is L-tyrosyl-[protein] + ATP = O-(5'-adenylyl)-L-tyrosyl-[protein] + diphosphate. The enzyme catalyses L-histidyl-[protein] + UTP = N(tele)-(5'-uridylyl)-L-histidyl-[protein] + diphosphate. It carries out the reaction L-seryl-[protein] + UTP = O-(5'-uridylyl)-L-seryl-[protein] + diphosphate. It catalyses the reaction L-tyrosyl-[protein] + UTP = O-(5'-uridylyl)-L-tyrosyl-[protein] + diphosphate. Its function is as follows. Nucleotidyltransferase involved in the post-translational modification of proteins. It can catalyze the addition of adenosine monophosphate (AMP) or uridine monophosphate (UMP) to a protein, resulting in modifications known as AMPylation and UMPylation. This chain is Protein nucleotidyltransferase YdiU, found in Ectopseudomonas mendocina (strain ymp) (Pseudomonas mendocina).